A 146-amino-acid chain; its full sequence is Large ribosomal subunit protein uL15 (146 aa).

A disordered region spans residues M1–L57. The segment covering S42 to G52 has biased composition (gly residues).

The protein belongs to the universal ribosomal protein uL15 family. In terms of assembly, part of the 50S ribosomal subunit.

Binds to the 23S rRNA. This is Large ribosomal subunit protein uL15 from Acetivibrio thermocellus (strain ATCC 27405 / DSM 1237 / JCM 9322 / NBRC 103400 / NCIMB 10682 / NRRL B-4536 / VPI 7372) (Clostridium thermocellum).